The following is a 231-amino-acid chain: 5'-methylthioadenosine/S-adenosylhomocysteine nucleosidase (231 aa).

Glu12 serves as the catalytic Proton acceptor. Substrate contacts are provided by residues Gly78, Val153, and 174–175; that span reads ME. Residue Asp198 is the Proton donor of the active site.

Belongs to the PNP/UDP phosphorylase family. MtnN subfamily.

It catalyses the reaction S-adenosyl-L-homocysteine + H2O = S-(5-deoxy-D-ribos-5-yl)-L-homocysteine + adenine. The enzyme catalyses S-methyl-5'-thioadenosine + H2O = 5-(methylsulfanyl)-D-ribose + adenine. The catalysed reaction is 5'-deoxyadenosine + H2O = 5-deoxy-D-ribose + adenine. It functions in the pathway amino-acid biosynthesis; L-methionine biosynthesis via salvage pathway; S-methyl-5-thio-alpha-D-ribose 1-phosphate from S-methyl-5'-thioadenosine (hydrolase route): step 1/2. Catalyzes the irreversible cleavage of the glycosidic bond in both 5'-methylthioadenosine (MTA) and S-adenosylhomocysteine (SAH/AdoHcy) to adenine and the corresponding thioribose, 5'-methylthioribose and S-ribosylhomocysteine, respectively. Also cleaves 5'-deoxyadenosine, a toxic by-product of radical S-adenosylmethionine (SAM) enzymes, into 5-deoxyribose and adenine. This chain is 5'-methylthioadenosine/S-adenosylhomocysteine nucleosidase, found in Vibrio cholerae serotype O1 (strain ATCC 39315 / El Tor Inaba N16961).